The primary structure comprises 201 residues: Small ribosomal subunit protein uS4c (201 aa).

A disordered region spans residues 20–44 (GLTSKRPTVGSELRNQSRSTKKSQY). The region spanning 89 to 150 (MRLDNILFRL…NKKSKTLIQN (62 aa)) is the S4 RNA-binding domain.

The protein belongs to the universal ribosomal protein uS4 family. As to quaternary structure, part of the 30S ribosomal subunit. Contacts protein S5. The interaction surface between S4 and S5 is involved in control of translational fidelity.

It is found in the plastid. Its subcellular location is the chloroplast. Its function is as follows. One of the primary rRNA binding proteins, it binds directly to 16S rRNA where it nucleates assembly of the body of the 30S subunit. With S5 and S12 plays an important role in translational accuracy. This chain is Small ribosomal subunit protein uS4c (rps4), found in Lotus japonicus (Lotus corniculatus var. japonicus).